We begin with the raw amino-acid sequence, 99 residues long: Large ribosomal subunit protein uL23 (99 aa).

It belongs to the universal ribosomal protein uL23 family. Part of the 50S ribosomal subunit. Contacts protein L29, and trigger factor when it is bound to the ribosome.

Functionally, one of the early assembly proteins it binds 23S rRNA. One of the proteins that surrounds the polypeptide exit tunnel on the outside of the ribosome. Forms the main docking site for trigger factor binding to the ribosome. This Francisella tularensis subsp. holarctica (strain OSU18) protein is Large ribosomal subunit protein uL23.